Reading from the N-terminus, the 345-residue chain is Phosphoribosylformylglycinamidine cyclo-ligase (345 aa).

It belongs to the AIR synthase family.

It is found in the cytoplasm. It catalyses the reaction 2-formamido-N(1)-(5-O-phospho-beta-D-ribosyl)acetamidine + ATP = 5-amino-1-(5-phospho-beta-D-ribosyl)imidazole + ADP + phosphate + H(+). Its pathway is purine metabolism; IMP biosynthesis via de novo pathway; 5-amino-1-(5-phospho-D-ribosyl)imidazole from N(2)-formyl-N(1)-(5-phospho-D-ribosyl)glycinamide: step 2/2. The chain is Phosphoribosylformylglycinamidine cyclo-ligase from Salmonella choleraesuis (strain SC-B67).